Here is a 963-residue protein sequence, read N- to C-terminus: VPS35 endosomal protein-sorting factor-like (963 aa).

Positions Ser-43–Leu-69 are disordered. Positions Ser-53–Leu-69 are enriched in low complexity. A Phosphoserine modification is found at Ser-265. Residues Ala-703–Phe-719 form a helical membrane-spanning segment.

This sequence belongs to the VPS35L family. Component of the heterotrimeric retriever complex formed by VPS26C, VPS29 and VPS35L. Interacts with VPS29. Interacts with COMMD1, CCDC93 and CCDC22; associates with the CCC (COMMD/CCDC22/CCDC93) complex which contains at least COMMD1 (and possibly other COMM domain-containing proteins), CCDC22 and CCDC93. Interacts with WASHC1, WASHC2A and WASHC2C. Interacts with SNX17 and SNX31.

The protein resides in the membrane. It localises to the endosome. Acts as a component of the retriever complex. The retriever complex is a heterotrimeric complex related to retromer cargo-selective complex (CSC) and essential for retromer-independent retrieval and recycling of numerous cargos such as integrin alpha-5/beta-1 (ITGA5:ITGB1). The recruitment of the retriever complex to the endosomal membrane involves CCC and WASH complexes. In the endosomes, drives the retrieval and recycling of NxxY-motif-containing cargo proteins by coupling to SNX17, a cargo essential for the homeostatic maintenance of numerous cell surface proteins associated with processes that include cell migration, cell adhesion, nutrient supply and cell signaling. Involved in copper-dependent ATP7A trafficking between the trans-Golgi network and vesicles in the cell periphery; the function is proposed to depend on its association with the CCC complex and cooperation with the WASH complex on early endosomes. Seems not to be required for CCC complex stability. Functionally, (Microbial infection) The heterotrimeric retriever complex, in collaboration with the CCC complex, mediates the exit of human papillomavirus to the cell surface. The chain is VPS35 endosomal protein-sorting factor-like from Homo sapiens (Human).